The chain runs to 444 residues: Tubulin beta chain (444 aa).

Residues M1–I4 carry the MREI motif motif. GTP is bound by residues Q11, E69, S138, G142, T143, G144, N204, and N226. Residue E69 participates in Mg(2+) binding. The disordered stretch occupies residues E421–A444. Acidic residues predominate over residues T429–A444. A 5-glutamyl polyglutamate modification is found at E438.

This sequence belongs to the tubulin family. In terms of assembly, dimer of alpha and beta chains. A typical microtubule is a hollow water-filled tube with an outer diameter of 25 nm and an inner diameter of 15 nM. Alpha-beta heterodimers associate head-to-tail to form protofilaments running lengthwise along the microtubule wall with the beta-tubulin subunit facing the microtubule plus end conferring a structural polarity. Microtubules usually have 13 protofilaments but different protofilament numbers can be found in some organisms and specialized cells. Mg(2+) serves as cofactor. Post-translationally, some glutamate residues at the C-terminus are polyglycylated, resulting in polyglycine chains on the gamma-carboxyl group. Glycylation is mainly limited to tubulin incorporated into axonemes (cilia and flagella) whereas glutamylation is prevalent in neuronal cells, centrioles, axonemes, and the mitotic spindle. Both modifications can coexist on the same protein on adjacent residues, and lowering polyglycylation levels increases polyglutamylation, and reciprocally. The precise function of polyglycylation is still unclear. Some glutamate residues at the C-terminus are polyglutamylated, resulting in polyglutamate chains on the gamma-carboxyl group. Polyglutamylation plays a key role in microtubule severing by spastin (SPAST). SPAST preferentially recognizes and acts on microtubules decorated with short polyglutamate tails: severing activity by SPAST increases as the number of glutamates per tubulin rises from one to eight, but decreases beyond this glutamylation threshold.

The protein resides in the cytoplasm. The protein localises to the cytoskeleton. In terms of biological role, tubulin is the major constituent of microtubules, a cylinder consisting of laterally associated linear protofilaments composed of alpha- and beta-tubulin heterodimers. Microtubules grow by the addition of GTP-tubulin dimers to the microtubule end, where a stabilizing cap forms. Below the cap, tubulin dimers are in GDP-bound state, owing to GTPase activity of alpha-tubulin. This is Tubulin beta chain (tubb) from Xenopus laevis (African clawed frog).